The following is a 664-amino-acid chain: Macoilin (664 aa).

4 helical membrane passes run 28-48, 75-95, 120-140, and 154-174; these read TFLYLKFLVVWALVLLADFVL, AFSVFFVCVAFTSNIICLLFI, VCLPTVSLWILFVYIEAAIRF, and FAAHCIGYPVVTLGFGFKSYV. The segment covering 253-265 has biased composition (basic and acidic residues); sequence REKGKEKDKDAKK. The disordered stretch occupies residues 253–274; the sequence is REKGKEKDKDAKKHNLGINNNN. Position 305 is a phosphoserine (serine 305). Over residues 320–348 the composition is skewed to polar residues; the sequence is KNYKNASGVVNSSPRSHSATNGSIPSSSS. The disordered stretch occupies residues 320–375; the sequence is KNYKNASGVVNSSPRSHSATNGSIPSSSSKNEKKQKCTSKSPSTHKDLMENCIPNN. N-linked (GlcNAc...) asparagine glycosylation is present at asparagine 324. Phosphoserine is present on serine 332. N-linked (GlcNAc...) asparagine glycosylation is found at asparagine 340 and asparagine 452. The tract at residues 630 to 664 is disordered; sequence TSPLSPVSPHYSSKFVETSPSGLDPNASVYQPLKK. Phosphoserine occurs at positions 631 and 634. Asparagine 655 carries N-linked (GlcNAc...) asparagine glycosylation.

It belongs to the macoilin family.

Its subcellular location is the rough endoplasmic reticulum membrane. It localises to the nucleus membrane. Functionally, plays a role in the regulation of neuronal activity. The sequence is that of Macoilin (MACO1) from Canis lupus familiaris (Dog).